We begin with the raw amino-acid sequence, 415 residues long: Histidine--tRNA ligase (415 aa).

The protein belongs to the class-II aminoacyl-tRNA synthetase family. Homodimer.

It localises to the cytoplasm. The catalysed reaction is tRNA(His) + L-histidine + ATP = L-histidyl-tRNA(His) + AMP + diphosphate + H(+). The chain is Histidine--tRNA ligase from Clostridium perfringens (strain SM101 / Type A).